The sequence spans 142 residues: UPF0102 protein Bcen2424_0290 (142 aa).

Residues 1-19 (MCHAAPARPEGARGRPPSG) show a composition bias toward low complexity. Residues 1–27 (MCHAAPARPEGARGRPPSGDNFSGAAR) are disordered.

This sequence belongs to the UPF0102 family.

The polypeptide is UPF0102 protein Bcen2424_0290 (Burkholderia cenocepacia (strain HI2424)).